A 504-amino-acid polypeptide reads, in one-letter code: Pyruvate kinase (504 aa).

Position 53 (Arg53) interacts with substrate. Positions 55, 57, 88, and 89 each coordinate K(+). 55 to 58 (NFSH) is an ATP binding site. ATP-binding residues include Arg95 and Lys181. Glu246 contributes to the Mg(2+) binding site. Positions 269, 270, and 302 each coordinate substrate. Asp270 contributes to the Mg(2+) binding site.

The protein belongs to the pyruvate kinase family. Homotetramer. Mg(2+) serves as cofactor. K(+) is required as a cofactor.

Its subcellular location is the cytoplasm. It catalyses the reaction pyruvate + ATP = phosphoenolpyruvate + ADP + H(+). The protein operates within carbohydrate degradation; glycolysis; pyruvate from D-glyceraldehyde 3-phosphate: step 5/5. The sequence is that of Pyruvate kinase (CDC19) from Candida albicans (strain SC5314 / ATCC MYA-2876) (Yeast).